The following is a 392-amino-acid chain: Metallophosphoesterase 1 (392 aa).

A helical membrane pass occupies residues lysine 25–valine 45. The a divalent metal cation site is built by aspartate 73, aspartate 115, asparagine 153, histidine 246, histidine 300, and histidine 302. The chain crosses the membrane as a helical span at residues aspartate 352–histidine 372.

The protein belongs to the metallophosphoesterase superfamily. MPPE1 family. As to quaternary structure, interacts with GPI-anchor proteins (via the GPI portion). Interacts with TMED10. The cofactor is Mn(2+).

Its subcellular location is the endoplasmic reticulum-Golgi intermediate compartment membrane. Its function is as follows. Metallophosphoesterase that catalyzes the removal of a side-chain ethanolamine-phosphate (EtNP) from the second mannose of the GPI-anchor protein intermediate. Participates in the glycan remodeling steps of GPI-anchor maturation to allow an efficient transport of GPI-anchor proteins from the endoplasmic reticulum to the Golgi. This is Metallophosphoesterase 1 from Ailuropoda melanoleuca (Giant panda).